We begin with the raw amino-acid sequence, 88 residues long: MKVLFAKTFVKDLKHVPGHIRKRIKLIIEECQNSNSLNDLKLDIKKIKGYHNYYRIRVGNYRIGIEVNGDTIIFRRVLHRKSIYDYFP.

Belongs to the RelE toxin family. Forms heterodimers with RelB3 and possibly a heterotetramer RelE3-RelB3(2)-RelE3 from 2 heterodimers. The heterotetramer is probably not very stable in solution.

Functionally, toxic component of a type II toxin-antitoxin (TA) system. Has RNase activity. Is very toxic upon expression in E.coli. Its toxic activity is probably neutralized by the cognate antitoxin RelB3. In Methanocaldococcus jannaschii (strain ATCC 43067 / DSM 2661 / JAL-1 / JCM 10045 / NBRC 100440) (Methanococcus jannaschii), this protein is Toxin RelE3 (relE3).